Reading from the N-terminus, the 159-residue chain is Transcription elongation factor GreA (159 aa).

A coiled-coil region spans residues 47–73; that stretch reads AEYDAAREEQSLTEAHIADLENKLSTA.

It belongs to the GreA/GreB family.

Its function is as follows. Necessary for efficient RNA polymerase transcription elongation past template-encoded arresting sites. The arresting sites in DNA have the property of trapping a certain fraction of elongating RNA polymerases that pass through, resulting in locked ternary complexes. Cleavage of the nascent transcript by cleavage factors such as GreA or GreB allows the resumption of elongation from the new 3'terminus. GreA releases sequences of 2 to 3 nucleotides. This Chlorobium phaeobacteroides (strain DSM 266 / SMG 266 / 2430) protein is Transcription elongation factor GreA.